Reading from the N-terminus, the 458-residue chain is Phosphoglucosamine mutase (458 aa).

The active-site Phosphoserine intermediate is the Ser106. Residues Ser106, Asp247, Asp249, and Asp251 each contribute to the Mg(2+) site. The residue at position 106 (Ser106) is a Phosphoserine.

This sequence belongs to the phosphohexose mutase family. Requires Mg(2+) as cofactor. Post-translationally, activated by phosphorylation.

The enzyme catalyses alpha-D-glucosamine 1-phosphate = D-glucosamine 6-phosphate. In terms of biological role, catalyzes the conversion of glucosamine-6-phosphate to glucosamine-1-phosphate. The chain is Phosphoglucosamine mutase from Chlamydia abortus (strain DSM 27085 / S26/3) (Chlamydophila abortus).